Here is a 735-residue protein sequence, read N- to C-terminus: Cyclic nucleotide-gated channel cone photoreceptor subunit alpha (735 aa).

The Cytoplasmic portion of the chain corresponds to 1–214 (MAKINTQHSY…PSSNMYYNWL (214 aa)). The disordered stretch occupies residues 142–191 (VNFSNNTNEDKKEEKKEVKEEKKEEKKEEKKEEKKDDKKDDKKDDKKDDK). Over residues 149-191 (NEDKKEEKKEVKEEKKEEKKEEKKEEKKDDKKDDKKDDKKDDK) the composition is skewed to basic and acidic residues. The chain crosses the membrane as a helical span at residues 215-236 (TIIAAPVFYNWCMLICRACFDE). Over 237–246 (LQIDHIKLWL) the chain is Extracellular. A helical transmembrane segment spans residues 247–267 (FLDYCSDIIYVFDMFVRFRTG). The Cytoplasmic segment spans residues 268-292 (FLEQGLLVKDEKKLRDHYTQTVQFK). A helical transmembrane segment spans residues 293–311 (LDVLSLLPTDLAYLKLGLN). Topologically, residues 312–316 (YPELR) are extracellular. Residues 317–335 (FNRLLRIARLFEFFDRTET) form a helical membrane-spanning segment. At 336–342 (RTNYPNM) the chain is on the cytoplasmic side. Residues 343-366 (FRIGNLVLYILIIIHWNACIYFAI) traverse the membrane as a helical segment. Over 367-389 (SKVIGFGTDSWVYPNVSIPEYGR) the chain is Extracellular. 2 consecutive transmembrane segments (helical) span residues 390 to 424 (LSRKYIYSLYWSTLTLTTIGETPPPVKDEEYLFVV) and 425 to 449 (IDFLVGVLIFATIVGNVGSMISNMN). Topologically, residues 450 to 735 (ASRAEFQAKV…PEKPEEQKKD (286 aa)) are cytoplasmic. Residues 532–654 (LLIE…DNLI), glutamate 591, and arginine 606 each bind 3',5'-cyclic GMP. The tract at residues 715–735 (GSGSLSVGEPEPEKPEEQKKD) is disordered. A compositionally biased stretch (basic and acidic residues) spans 725-735 (EPEKPEEQKKD).

This sequence belongs to the cyclic nucleotide-gated cation channel (TC 1.A.1.5) family.

Its subcellular location is the membrane. Visual signal transduction is mediated by a G-protein coupled cascade using cGMP as second messenger. This protein can be activated by cyclic GMP which leads to an opening of the cation channel and thereby causing a depolarization of cone photoreceptors. The polypeptide is Cyclic nucleotide-gated channel cone photoreceptor subunit alpha (Gallus gallus (Chicken)).